Consider the following 263-residue polypeptide: Auxin-responsive protein IAA3 (263 aa).

Disordered stretches follow at residues 1–54 (MSPP…RRPA) and 76–121 (RVFP…PAAK). Over residues 28–38 (RADDVDLKGTE) the composition is skewed to basic and acidic residues. Residues 39–43 (LRLGL) carry the EAR-like (transcriptional repression) motif. One can recognise a PB1 domain in the interval 158-245 (FLYVKVSMDG…SCRRLRIMKG (88 aa)).

The protein belongs to the Aux/IAA family. In terms of assembly, homodimers and heterodimers. As to expression, highly expressed in flowers. Expressed in roots and shoots.

The protein resides in the nucleus. In terms of biological role, aux/IAA proteins are short-lived transcriptional factors that function as repressors of early auxin response genes at low auxin concentrations. In Oryza sativa subsp. japonica (Rice), this protein is Auxin-responsive protein IAA3 (IAA3).